The chain runs to 121 residues: MIIVTNTIKVEKGAAEHVIRQFTGANGDGHPTKDIAEVEGFLGFELWHSKPEDKDYEEVVVTSKWESEEAQRNWVKSDSFKKAHGRTKDTREQREDRKGIVGNEIARFEVVHVQNPVTIEK.

The 100-residue stretch at 2–101 (IIVTNTIKVE…EQREDRKGIV (100 aa)) folds into the ABM domain. Asn-6 contributes to the Fe cation binding site. Residues 76–98 (KSDSFKKAHGRTKDTREQREDRK) form a disordered region. The segment covering 78 to 98 (DSFKKAHGRTKDTREQREDRK) has biased composition (basic and acidic residues). His-84 is a binding site for heme.

Belongs to the antibiotic biosynthesis monooxygenase family. Heme-degrading monooxygenase IsdG subfamily. In terms of assembly, homodimer.

It is found in the cytoplasm. The catalysed reaction is heme b + 3 reduced [NADPH--hemoprotein reductase] + 3 O2 = biliverdin IXalpha + CO + Fe(2+) + 3 oxidized [NADPH--hemoprotein reductase] + 3 H2O + H(+). Functionally, allows bacterial pathogens to use the host heme as an iron source. Catalyzes the oxidative degradation of the heme macrocyclic porphyrin ring to the biliverdin in the presence of a suitable electron donor such as ascorbate or NADPH--cytochrome P450 reductase, with subsequent release of free iron. This Listeria welshimeri serovar 6b (strain ATCC 35897 / DSM 20650 / CCUG 15529 / CIP 8149 / NCTC 11857 / SLCC 5334 / V8) protein is Heme-degrading monooxygenase.